Consider the following 78-residue polypeptide: Defensin SD2 (78 aa).

The signal sequence occupies residues 1 to 20 (MKSSMKMFAALLLVVMCLLA). 4 cysteine pairs are disulfide-bonded: Cys-34/Cys-78, Cys-45/Cys-65, Cys-51/Cys-72, and Cys-55/Cys-74.

It belongs to the DEFL family. In terms of tissue distribution, highest expression in flowers and to a lesser extent in leaves. Lower levels in hypocotyls. No expression in roots and cotyledons.

It localises to the secreted. The protein localises to the cell wall. May play a protective role in flowers by protecting the reproductive organs from potential pathogen attack. The chain is Defensin SD2 (SD2) from Helianthus annuus (Common sunflower).